The primary structure comprises 341 residues: UDP-3-O-acylglucosamine N-acyltransferase (341 aa).

H242 (proton acceptor) is an active-site residue.

The protein belongs to the transferase hexapeptide repeat family. LpxD subfamily. In terms of assembly, homotrimer.

It carries out the reaction a UDP-3-O-[(3R)-3-hydroxyacyl]-alpha-D-glucosamine + a (3R)-hydroxyacyl-[ACP] = a UDP-2-N,3-O-bis[(3R)-3-hydroxyacyl]-alpha-D-glucosamine + holo-[ACP] + H(+). The protein operates within bacterial outer membrane biogenesis; LPS lipid A biosynthesis. Catalyzes the N-acylation of UDP-3-O-acylglucosamine using 3-hydroxyacyl-ACP as the acyl donor. Is involved in the biosynthesis of lipid A, a phosphorylated glycolipid that anchors the lipopolysaccharide to the outer membrane of the cell. The sequence is that of UDP-3-O-acylglucosamine N-acyltransferase from Haemophilus influenzae (strain 86-028NP).